Reading from the N-terminus, the 221-residue chain is Putative transmembrane protein ORF25 (221 aa).

Positions 1-23 (MTLAAKLIVLVYVALCFVNESTS) are cleaved as a signal peptide. 2 N-linked (GlcNAc...) asparagine; by host glycosylation sites follow: N19 and N179. Residues 24-191 (QDHSNIYHET…LAKARGVPMS (168 aa)) lie on the Extracellular side of the membrane. A helical transmembrane segment spans residues 192-212 (VSVISGICAIILVIFPIFITI). Over 213 to 221 (ANLRRVYLH) the chain is Cytoplasmic.

It localises to the host membrane. This is Putative transmembrane protein ORF25 from Ostreid herpesvirus 1 (isolate France) (OsHV-1).